The sequence spans 3093 residues: Genome polyprotein (3093 aa).

One can recognise a Peptidase S30 domain in the interval 255–403; the sequence is KRLLRHVHQA…TTTGERIEYY (149 aa). Residues His-311, Asp-323, and Ser-355 each act as for P1 proteinase activity in the active site. The Peptidase C6 domain maps to 690 to 809; that stretch reads HYVPKVGYCY…ASELKEYEIG (120 aa). Catalysis depends on for helper component proteinase activity residues Cys-698 and His-769. The region spanning 1215–1366 is the Helicase ATP-binding domain; it reads RVLADKDNEF…AQKSLDIMTL (152 aa). 1228 to 1235 contributes to the ATP binding site; the sequence is GHVGCGKS. The short motif at 1316–1319 is the DEVH box element; the sequence is DEVH. Residues 1367 to 1546 form the Helicase C-terminal domain; sequence PTMTPLDFVK…QVPPVLRNVN (180 aa). The Nuclear localization signal motif lies at 1883-1895; it reads DKVRKKANVHAMQ. Tyr-1915 carries the O-(5'-phospho-RNA)-tyrosine modification. The Peptidase C4 domain maps to 2041 to 2257; the sequence is SKALYGGPRC…VDVGGLYIHN (217 aa). Active-site for nuclear inclusion protein A activity residues include His-2082, Asp-2121, and Cys-2193. Positions 2516–2639 constitute a RdRp catalytic domain; it reads EWFIDADGSQ…NANEEAKDVV (124 aa). The segment covering 2800–2826 has biased composition (low complexity); the sequence is NAAATSGATTPAQNVGAGTTTPAKATP. Residues 2800 to 2842 are disordered; that stretch reads NAAATSGATTPAQNVGAGTTTPAKATPQSGRRPSFGSLIDNPI.

This sequence belongs to the potyviridae genome polyprotein family. VPg is uridylylated by the polymerase and is covalently attached to the 5'-end of the genomic RNA. This uridylylated form acts as a nucleotide-peptide primer for the polymerase. In terms of processing, genome polyprotein of potyviruses undergoes post-translational proteolytic processing by the main proteinase NIa-pro resulting in the production of at least ten individual proteins. The P1 proteinase and the HC-pro cleave only their respective C-termini autocatalytically. 6K1 is essential for proper proteolytic separation of P3 from CI.

The protein resides in the host cytoplasmic vesicle. The protein localises to the virion. The catalysed reaction is RNA(n) + a ribonucleoside 5'-triphosphate = RNA(n+1) + diphosphate. It catalyses the reaction Hydrolyzes glutaminyl bonds, and activity is further restricted by preferences for the amino acids in P6 - P1' that vary with the species of potyvirus, e.g. Glu-Xaa-Xaa-Tyr-Xaa-Gln-|-(Ser or Gly) for the enzyme from tobacco etch virus. The natural substrate is the viral polyprotein, but other proteins and oligopeptides containing the appropriate consensus sequence are also cleaved.. The enzyme catalyses Hydrolyzes a Gly-|-Gly bond at its own C-terminus, commonly in the sequence -Tyr-Xaa-Val-Gly-|-Gly, in the processing of the potyviral polyprotein.. In terms of biological role, required for aphid transmission and also has proteolytic activity. Only cleaves a Gly-Gly dipeptide at its own C-terminus. Interacts with virions and aphid stylets. Acts as a suppressor of RNA-mediated gene silencing, also known as post-transcriptional gene silencing (PTGS), a mechanism of plant viral defense that limits the accumulation of viral RNAs. May have RNA-binding activity. Its function is as follows. Has helicase activity. It may be involved in replication. Indispensable for virus replication. Reduces the abundance of host transcripts related to jasmonic acid biosynthesis therefore altering the host defenses. In order to increase its own stability, decreases host protein degradation pathways. Functionally, indispensable for virus replication. In terms of biological role, mediates the cap-independent, EIF4E-dependent translation of viral genomic RNAs. Binds to the cap-binding site of host EIF4E and thus interferes with the host EIF4E-dependent mRNA export and translation. VPg-RNA directly binds EIF4E and is a template for transcription. Also forms trimeric complexes with EIF4E-EIF4G, which are templates for translation. Its function is as follows. Has RNA-binding and proteolytic activities. An RNA-dependent RNA polymerase that plays an essential role in the virus replication. Functionally, involved in aphid transmission, cell-to-cell and systemis movement, encapsidation of the viral RNA and in the regulation of viral RNA amplification. This chain is Genome polyprotein, found in Brome streak virus (strain 11-Cal) (BStV).